The following is a 104-amino-acid chain: L-rhamnose mutarotase (104 aa).

Tyrosine 18 contacts substrate. Histidine 22 serves as the catalytic Proton donor. Substrate contacts are provided by residues tyrosine 41 and tryptophan 76–tryptophan 77.

It belongs to the rhamnose mutarotase family. As to quaternary structure, homodimer.

It is found in the cytoplasm. It catalyses the reaction alpha-L-rhamnose = beta-L-rhamnose. Its pathway is carbohydrate metabolism; L-rhamnose metabolism. Functionally, involved in the anomeric conversion of L-rhamnose. The chain is L-rhamnose mutarotase from Cronobacter sakazakii (strain ATCC BAA-894) (Enterobacter sakazakii).